The sequence spans 87 residues: Beta-toxin CsE3 (87 aa).

A signal peptide spans 1 to 19; the sequence is MNSLLIIAACLALIGTVWA. The LCN-type CS-alpha/beta domain maps to 20–85; sequence KEGYIVNYHT…VWPLPKKKCN (66 aa). Disulfide bonds link Cys-31/Cys-84, Cys-35/Cys-60, Cys-44/Cys-65, and Cys-48/Cys-67. Residue Asn-85 is modified to Asparagine amide.

Belongs to the long (4 C-C) scorpion toxin superfamily. Sodium channel inhibitor family. Beta subfamily. Expressed by the venom gland.

The protein localises to the secreted. Beta toxins bind voltage-independently at site-4 of sodium channels (Nav) and shift the voltage of activation toward more negative potentials thereby affecting sodium channel activation and promoting spontaneous and repetitive firing. In Centruroides sculpturatus (Arizona bark scorpion), this protein is Beta-toxin CsE3.